Here is a 134-residue protein sequence, read N- to C-terminus: GSH-induced LITAF domain protein (134 aa).

The LITAF domain maps to Asp-33–Lys-113. Cys-53 and Cys-56 together coordinate Zn(2+). The tract at residues Pro-68–Cys-88 is membrane-binding amphipathic helix. Residues Cys-101 and Cys-104 each coordinate Zn(2+).

It belongs to the CDIP1/LITAF family. As to quaternary structure, interacts (via N- and C-terminal) with MIEL1 and LSD1 (via N-terminus).

It is found in the cell membrane. In terms of biological role, acts as a membrane anchor, bringing other regulators of programmed cell death (PCD) to the plasma membrane. Negatively regulates hypersensitive cell death. This chain is GSH-induced LITAF domain protein, found in Arabidopsis thaliana (Mouse-ear cress).